A 451-amino-acid polypeptide reads, in one-letter code: UPF0210 protein APL_1491 (451 aa).

The protein belongs to the UPF0210 family. As to quaternary structure, homodimer.

This Actinobacillus pleuropneumoniae serotype 5b (strain L20) protein is UPF0210 protein APL_1491.